We begin with the raw amino-acid sequence, 260 residues long: Adenosylcobinamide-GDP ribazoletransferase (260 aa).

The next 7 helical transmembrane spans lie at 42 to 62 (PLAG…ANAI), 64 to 84 (LPPL…TGAL), 117 to 137 (FAAL…MAII), 144 to 164 (YALL…LAFW), 192 to 212 (GLGL…VALI), 214 to 234 (ALVL…AKIG), and 240 to 260 (TLGA…VMAL).

The protein belongs to the CobS family. Requires Mg(2+) as cofactor.

The protein localises to the cell inner membrane. It catalyses the reaction alpha-ribazole + adenosylcob(III)inamide-GDP = adenosylcob(III)alamin + GMP + H(+). The enzyme catalyses alpha-ribazole 5'-phosphate + adenosylcob(III)inamide-GDP = adenosylcob(III)alamin 5'-phosphate + GMP + H(+). It participates in cofactor biosynthesis; adenosylcobalamin biosynthesis; adenosylcobalamin from cob(II)yrinate a,c-diamide: step 7/7. Functionally, joins adenosylcobinamide-GDP and alpha-ribazole to generate adenosylcobalamin (Ado-cobalamin). Also synthesizes adenosylcobalamin 5'-phosphate from adenosylcobinamide-GDP and alpha-ribazole 5'-phosphate. This is Adenosylcobinamide-GDP ribazoletransferase from Brucella ovis (strain ATCC 25840 / 63/290 / NCTC 10512).